The primary structure comprises 633 residues: Biosynthetic arginine decarboxylase (633 aa).

Lysine 101 bears the N6-(pyridoxal phosphate)lysine mark. 284-294 serves as a coordination point for substrate; it reads VDVGGGLGVDY.

The protein belongs to the Orn/Lys/Arg decarboxylase class-II family. SpeA subfamily. Mg(2+) is required as a cofactor. The cofactor is pyridoxal 5'-phosphate.

It carries out the reaction L-arginine + H(+) = agmatine + CO2. It functions in the pathway amine and polyamine biosynthesis; agmatine biosynthesis; agmatine from L-arginine: step 1/1. In terms of biological role, catalyzes the biosynthesis of agmatine from arginine. The chain is Biosynthetic arginine decarboxylase from Aeromonas hydrophila subsp. hydrophila (strain ATCC 7966 / DSM 30187 / BCRC 13018 / CCUG 14551 / JCM 1027 / KCTC 2358 / NCIMB 9240 / NCTC 8049).